The chain runs to 126 residues: Fluoride-specific ion channel FluC (126 aa).

The next 4 helical transmembrane spans lie at P4 to L24, I33 to A53, F67 to V87, and M97 to L117. The Na(+) site is built by G74 and T77.

The protein belongs to the fluoride channel Fluc/FEX (TC 1.A.43) family.

The protein localises to the cell inner membrane. The catalysed reaction is fluoride(in) = fluoride(out). Its activity is regulated as follows. Na(+) is not transported, but it plays an essential structural role and its presence is essential for fluoride channel function. In terms of biological role, fluoride-specific ion channel. Important for reducing fluoride concentration in the cell, thus reducing its toxicity. The protein is Fluoride-specific ion channel FluC of Acinetobacter baumannii (strain AB307-0294).